A 389-amino-acid polypeptide reads, in one-letter code: Probable nitrate transporter NarT (389 aa).

Helical transmembrane passes span 14 to 34 (TLSL…MPFI), 45 to 65 (ISII…PFGY), 69 to 89 (IVGA…PIFF), 97 to 117 (GMLM…SVGV), 139 to 159 (GNIG…IIGW), 161 to 181 (TTVR…FIFG), 211 to 231 (WYFI…NYLV), 246 to 266 (GVFI…GDKF), 268 to 288 (AVKV…ILGI), 294 to 314 (LFTV…GLIF), 331 to 351 (IVSM…TYVA), and 353 to 373 (LTGS…IALF).

The protein belongs to the major facilitator superfamily. Nitrate/nitrite porter (TC 2.A.1.8) family.

Its subcellular location is the cell membrane. Functionally, probably required for nitrate uptake under anoxic conditions. Also possibly involved in excretion of nitrite produced by the dissimilatory reduction of nitrate. The sequence is that of Probable nitrate transporter NarT (narT) from Staphylococcus aureus (strain USA300).